Here is a 319-residue protein sequence, read N- to C-terminus: Methionyl-tRNA formyltransferase (319 aa).

(6S)-5,6,7,8-tetrahydrofolate is bound at residue 113 to 116 (SLLP).

It belongs to the Fmt family.

The catalysed reaction is L-methionyl-tRNA(fMet) + (6R)-10-formyltetrahydrofolate = N-formyl-L-methionyl-tRNA(fMet) + (6S)-5,6,7,8-tetrahydrofolate + H(+). Attaches a formyl group to the free amino group of methionyl-tRNA(fMet). The formyl group appears to play a dual role in the initiator identity of N-formylmethionyl-tRNA by promoting its recognition by IF2 and preventing the misappropriation of this tRNA by the elongation apparatus. In Pseudomonas fluorescens (strain ATCC BAA-477 / NRRL B-23932 / Pf-5), this protein is Methionyl-tRNA formyltransferase.